Consider the following 395-residue polypeptide: uncharacterized protein (395 aa).

4 disordered regions span residues 1–121 (MLLP…TANS), 136–187 (MRMK…LDRN), 308–335 (QNNE…SKDE), and 365–395 (IQKF…NEGD). Positions 13 to 28 (PKGEAKSLVARERKSQ) are enriched in basic and acidic residues. A compositionally biased stretch (basic residues) spans 64-73 (KSAKLRRKKS). Residues 97–111 (SIEKKKEEMTSKLPE) are compositionally biased toward basic and acidic residues. Positions 144–164 (TSRMATKSDSSLETMPESSHN) are enriched in polar residues. Over residues 170-179 (KSRKSQRTRG) the composition is skewed to basic residues. The span at 365 to 377 (IQKFRKKYQKQLK) shows a compositional bias: basic residues. The span at 378–395 (KSQEEKKDDTKTAKNEGD) shows a compositional bias: basic and acidic residues.

This is an uncharacterized protein from Caenorhabditis elegans.